The primary structure comprises 390 residues: Lissencephaly-1 homolog (390 aa).

Residues 7–39 form the LisH domain; the sequence is QREEINRAVAEYLQNNGYSEAFNMLLKEASLSE. Residues 54–80 adopt a coiled-coil conformation; sequence TTVLRLQRKVNDLEAKLLESQQEINHG. WD repeat units follow at residues 104–145, 146–185, 189–228, 231–270, 272–313, 316–355, and 358–390; these read GHRL…KTLK, GHTDAVNDIAIDAAGKQLVSCSTDLTIKLWDFGQSYDCLK, GHEHTVSSVTFLPTGDFVLSASRDHTIKQWDISTGYCVFT, GHNDWVRMIRISHDGTLFASGSLDQTVSVWSLPRKQRNWY, EIMS…VIFT, AHENWVRGLAFHPKGKYLVSVADDKMMRIWELSAQRCMKA, and AHEHFVSTVAFHQTNPYVITGSVDMSCKVWECR.

The protein belongs to the WD repeat LIS1/nudF family.

The protein localises to the cytoplasm. It is found in the cytoskeleton. The protein resides in the microtubule organizing center. Its subcellular location is the centrosome. Its function is as follows. Positively regulates the activity of the minus-end directed microtubule motor protein dynein. May enhance dynein-mediated microtubule sliding by targeting dynein to the microtubule plus end. Required for several dynein- and microtubule-dependent processes. The chain is Lissencephaly-1 homolog from Caenorhabditis briggsae.